Consider the following 539-residue polypeptide: 2,3-dihydroxybenzoate-AMP ligase (539 aa).

Gly-191 is an ATP binding site. Substrate is bound by residues 234-235 and Ser-240; that span reads HN. Residues Gly-307, Val-329, Asp-413, Arg-428, and Lys-519 each contribute to the ATP site. Residue Lys-519 coordinates substrate.

The protein belongs to the ATP-dependent AMP-binding enzyme family.

It is found in the cytoplasm. It carries out the reaction 2,3-dihydroxybenzoate + holo-[ACP] + ATP = 2,3-dihydroxybenzoyl-[ACP] + AMP + diphosphate. It participates in siderophore biosynthesis; bacillibactin biosynthesis. Its function is as follows. Involved in the biosynthesis of the catecholic siderophore bacillibactin. Catalyzes the activation of the carboxylate group of 2,3-dihydroxy-benzoate (DHB), via ATP-dependent PPi exchange reactions, to the acyladenylate. This Bacillus subtilis (strain 168) protein is 2,3-dihydroxybenzoate-AMP ligase.